Reading from the N-terminus, the 217-residue chain is GTP cyclohydrolase 1 (217 aa).

3 residues coordinate Zn(2+): C109, H112, and C180.

Belongs to the GTP cyclohydrolase I family. Toroid-shaped homodecamer, composed of two pentamers of five dimers.

The enzyme catalyses GTP + H2O = 7,8-dihydroneopterin 3'-triphosphate + formate + H(+). It participates in cofactor biosynthesis; 7,8-dihydroneopterin triphosphate biosynthesis; 7,8-dihydroneopterin triphosphate from GTP: step 1/1. In Vibrio cholerae serotype O1 (strain ATCC 39315 / El Tor Inaba N16961), this protein is GTP cyclohydrolase 1.